The chain runs to 269 residues: Protein BASIC PENTACYSTEINE3 (269 aa).

The protein belongs to the BBR/BPC family. Expressed in seedlings, leaves and pistils. Detected in the base of flowers and tips of carpels, in petal vasculature, in anthers, in young rosette, in the lateral and primary roots, and in the gynobasal portion of the ovule.

The protein resides in the nucleus. Transcriptional regulator that specifically binds to GA-rich elements (GAGA-repeats) present in regulatory sequences of genes involved in developmental processes. The chain is Protein BASIC PENTACYSTEINE3 (BPC3) from Arabidopsis thaliana (Mouse-ear cress).